Reading from the N-terminus, the 278-residue chain is Ribosomal RNA small subunit methyltransferase A (278 aa).

S-adenosyl-L-methionine-binding residues include Asn28, Leu30, Gly55, Glu77, Asp103, and Asn122.

This sequence belongs to the class I-like SAM-binding methyltransferase superfamily. rRNA adenine N(6)-methyltransferase family. RsmA subfamily.

The protein resides in the cytoplasm. The catalysed reaction is adenosine(1518)/adenosine(1519) in 16S rRNA + 4 S-adenosyl-L-methionine = N(6)-dimethyladenosine(1518)/N(6)-dimethyladenosine(1519) in 16S rRNA + 4 S-adenosyl-L-homocysteine + 4 H(+). Functionally, specifically dimethylates two adjacent adenosines (A1518 and A1519) in the loop of a conserved hairpin near the 3'-end of 16S rRNA in the 30S particle. May play a critical role in biogenesis of 30S subunits. The chain is Ribosomal RNA small subunit methyltransferase A from Cereibacter sphaeroides (strain ATCC 17023 / DSM 158 / JCM 6121 / CCUG 31486 / LMG 2827 / NBRC 12203 / NCIMB 8253 / ATH 2.4.1.) (Rhodobacter sphaeroides).